The primary structure comprises 71 residues: Large ribosomal subunit protein bL31 (71 aa).

The Zn(2+) site is built by Cys-16, Cys-18, Cys-37, and Cys-40.

Belongs to the bacterial ribosomal protein bL31 family. Type A subfamily. In terms of assembly, part of the 50S ribosomal subunit. It depends on Zn(2+) as a cofactor.

Functionally, binds the 23S rRNA. The polypeptide is Large ribosomal subunit protein bL31 (Nitratidesulfovibrio vulgaris (strain DSM 19637 / Miyazaki F) (Desulfovibrio vulgaris)).